The chain runs to 100 residues: Acylphosphatase (100 aa).

The region spanning R14–S100 is the Acylphosphatase-like domain. Catalysis depends on residues R29 and N47.

Belongs to the acylphosphatase family.

It catalyses the reaction an acyl phosphate + H2O = a carboxylate + phosphate + H(+). This is Acylphosphatase (acyP) from Synechococcus sp. (strain WH7803).